Consider the following 84-residue polypeptide: Large ribosomal subunit protein uL23 (84 aa).

It belongs to the universal ribosomal protein uL23 family. Part of the 50S ribosomal subunit. Contacts protein L29.

Functionally, binds to 23S rRNA. One of the proteins that surrounds the polypeptide exit tunnel on the outside of the ribosome. The polypeptide is Large ribosomal subunit protein uL23 (Haloquadratum walsbyi (strain DSM 16790 / HBSQ001)).